Consider the following 602-residue polypeptide: Bifunctional xylanase/deacetylase (602 aa).

The first 14 residues, 1 to 14, serve as a signal peptide directing secretion; the sequence is MSATLLVPSMTVKA. A GH11 domain is found at 17-211; the sequence is TIYNNKTGNQ…SSGSASVYKN (195 aa). The Nucleophile role is filled by Glu-108. Catalysis depends on Glu-198, which acts as the Proton donor. Residues 216 to 240 form a disordered region; that stretch reads GGSSSSSGNQGGNQGGNTGNENAGN. Residues 224 to 233 show a composition bias toward gly residues; sequence NQGGNQGGNT. The CBM6 domain maps to 249 to 366; sequence DKIQCETMTK…DAYLDYFNNS (118 aa). In terms of domain architecture, NodB homology spans 402–578; that stretch reads KLIALTFDDG…GLKNQGYTFV (177 aa).

It belongs to the glycosyl hydrolase 11 (cellulase G) family. In the later growth phases, seems to undergo a proteolytic cleavage into a 30 kDa protein possessing xylanolytic activity.

The protein resides in the secreted. It catalyses the reaction Endohydrolysis of (1-&gt;4)-beta-D-xylosidic linkages in xylans.. The protein operates within glycan degradation; xylan degradation. Endo-acting xylanase which specifically cleaves internal linkages on the xylan backbone, releasing xylooligosaccharides. Is also probably able, via its C-terminal domain, to remove acetyl groups from acetylated xylan, and thus it is probably capable of hydrolyzing acetylated xylan. This chain is Bifunctional xylanase/deacetylase (xyn11A), found in Pseudobutyrivibrio xylanivorans.